Consider the following 137-residue polypeptide: Large ribosomal subunit protein bL12 (137 aa).

This sequence belongs to the bacterial ribosomal protein bL12 family. In terms of assembly, homodimer. Part of the ribosomal stalk of the 50S ribosomal subunit. Forms a multimeric L10(L12)X complex, where L10 forms an elongated spine to which 2 to 4 L12 dimers bind in a sequential fashion. Binds GTP-bound translation factors.

Functionally, forms part of the ribosomal stalk which helps the ribosome interact with GTP-bound translation factors. Is thus essential for accurate translation. This Gloeobacter violaceus (strain ATCC 29082 / PCC 7421) protein is Large ribosomal subunit protein bL12.